The primary structure comprises 431 residues: Evolutionarily conserved signaling intermediate in Toll pathway, mitochondrial (431 aa).

The N-terminal 48 residues, 1–48 (MSWVQATLLARGLCRAWGGTCGAALTGTSISQVPRRLPRGLHCSAAAH), are a transit peptide targeting the mitochondrion. Residue lysine 372 forms a Glycyl lysine isopeptide (Lys-Gly) (interchain with G-Cter in ubiquitin) linkage. The disordered stretch occupies residues 400–431 (LQTSSAGLEEPPLPEDHQEEDDNLQRQQQGQS).

The protein belongs to the ECSIT family. As to quaternary structure, interacts with MAP3K1, SMAD4 and TRAF6. Interacts with SMAD1 only after BMP4-treatment. Part of the mitochondrial complex I assembly/MCIA complex that comprises at least the core subunits TMEM126B, NDUFAF1, ECSIT and ACAD9 and complement subunits such as COA1 and TMEM186. Interacts with NDUFAF1. Interacts with ACAD9. Interacts with TRIM59. Interacts with TMEM70 and TMEM242. Interacts (when ubiquitinated) with NF-kappa-B subunits RELA and NFKB1. Interacts with RIGI, IFIT1 and MAVS; these interactions promote RLR-mediated type I IFN induction. Interacts with SQSTM1; this interaction inhibits TLR4 signaling via functional regulation of the TRAF6-ECSIT complex. Interacts with cereblon/CRBN; this interaction inhibits the ubiquitination of ECSIT. In terms of processing, ubiquitinated on Lys-372; leading to translocation in the nucleus together with RELA and NFKB1 and expression of NF-kappa-B-dependent genes.

The protein resides in the cytoplasm. Its subcellular location is the nucleus. The protein localises to the mitochondrion. Functionally, adapter protein that plays a role in different signaling pathways including TLRs and IL-1 pathways or innate antiviral induction signaling. Plays a role in the activation of NF-kappa-B by forming a signal complex with TRAF6 and TAK1/MAP3K7 to activate TAK1/MAP3K7 leading to activation of IKKs. Once ubiquitinated, interacts with the dissociated RELA and NFKB1 proteins and translocates to the nucleus where it induces NF-kappa-B-dependent gene expression. Plays a role in innate antiviral immune response by bridging the pattern recognition receptors RIGI and MDA5/IFIT1 to the MAVS complex at the mitochondrion. Promotes proteolytic activation of MAP3K1. Involved in the BMP signaling pathway. Required for normal embryonic development. In terms of biological role, as part of the MCIA complex, involved in the assembly of the mitochondrial complex I. In Homo sapiens (Human), this protein is Evolutionarily conserved signaling intermediate in Toll pathway, mitochondrial.